Consider the following 383-residue polypeptide: Lipid-A-disaccharide synthase (383 aa).

Belongs to the LpxB family.

The catalysed reaction is a lipid X + a UDP-2-N,3-O-bis[(3R)-3-hydroxyacyl]-alpha-D-glucosamine = a lipid A disaccharide + UDP + H(+). It participates in bacterial outer membrane biogenesis; LPS lipid A biosynthesis. Condensation of UDP-2,3-diacylglucosamine and 2,3-diacylglucosamine-1-phosphate to form lipid A disaccharide, a precursor of lipid A, a phosphorylated glycolipid that anchors the lipopolysaccharide to the outer membrane of the cell. This chain is Lipid-A-disaccharide synthase, found in Anaeromyxobacter dehalogenans (strain 2CP-C).